A 134-amino-acid chain; its full sequence is Retinol-binding protein 2 (134 aa).

All-trans-retinol is bound by residues Lys-41 and Gln-109.

This sequence belongs to the calycin superfamily. Fatty-acid binding protein (FABP) family. As to expression, higher expression in adult small intestine and to a much lesser extent in fetal kidney.

It localises to the cytoplasm. Its function is as follows. Intracellular transport of retinol. The protein is Retinol-binding protein 2 (RBP2) of Homo sapiens (Human).